A 251-amino-acid polypeptide reads, in one-letter code: Imidazole glycerol phosphate synthase subunit HisF (251 aa).

Catalysis depends on residues D11 and D130.

This sequence belongs to the HisA/HisF family. As to quaternary structure, heterodimer of HisH and HisF.

Its subcellular location is the cytoplasm. The catalysed reaction is 5-[(5-phospho-1-deoxy-D-ribulos-1-ylimino)methylamino]-1-(5-phospho-beta-D-ribosyl)imidazole-4-carboxamide + L-glutamine = D-erythro-1-(imidazol-4-yl)glycerol 3-phosphate + 5-amino-1-(5-phospho-beta-D-ribosyl)imidazole-4-carboxamide + L-glutamate + H(+). It functions in the pathway amino-acid biosynthesis; L-histidine biosynthesis; L-histidine from 5-phospho-alpha-D-ribose 1-diphosphate: step 5/9. Its function is as follows. IGPS catalyzes the conversion of PRFAR and glutamine to IGP, AICAR and glutamate. The HisF subunit catalyzes the cyclization activity that produces IGP and AICAR from PRFAR using the ammonia provided by the HisH subunit. The protein is Imidazole glycerol phosphate synthase subunit HisF of Streptococcus mutans serotype c (strain ATCC 700610 / UA159).